Here is a 365-residue protein sequence, read N- to C-terminus: MVQKLRRGYTTGTCAAGAAKAAALALWRGEEVQEITLTLPRGEIITLPVTVHKGVEEAEAIIIKDAGDDPDVTHGVAIHVRARKQAGGITLRGGEGIGIVTRPGLAVPVGEPAINPVPRAMIKEAVAAIVPPGLGMELEISIPEGARLARRTLNPRLGIEGGLSILGTTGIVEPMSEEAFRNSLVPQIDVALAAGWETLVLTPGRLGQRQAEEKYGLPATAIILTSNFIGYLLEACVERRVKRVLLWGHGGKLVKVAGGIFYTHSHVADARQEIIAALAAAAGASREIVQQILAATTVEAVQEVIRGSDFEPGFWDSLAARASQRATDLVHGELTVGTALLNLQGDIMGRDEVARQIMGDWGYDR.

Belongs to the CbiD family.

It carries out the reaction Co-precorrin-5B + S-adenosyl-L-methionine = Co-precorrin-6A + S-adenosyl-L-homocysteine. The protein operates within cofactor biosynthesis; adenosylcobalamin biosynthesis; cob(II)yrinate a,c-diamide from sirohydrochlorin (anaerobic route): step 6/10. Its function is as follows. Catalyzes the methylation of C-1 in cobalt-precorrin-5B to form cobalt-precorrin-6A. This is Cobalt-precorrin-5B C(1)-methyltransferase from Moorella thermoacetica (strain ATCC 39073 / JCM 9320).